The chain runs to 1038 residues: Eukaryotic translation initiation factor 3 subunit A (1038 aa).

A coiled-coil region spans residues 92-121; the sequence is LKKFIELAEKKVTEAQAKADEIQSSLESAA. The PCI domain maps to 339–523; sequence MTKAVSFVLL…GVLTFDTDVF (185 aa). A coiled-coil region spans residues 611–899; sequence IDKKKEAATD…QKQREEEAEA (289 aa). Composition is skewed to basic and acidic residues over residues 621–632 and 800–901; these read ALQRKQREEETR and RHEE…EARR. Disordered stretches follow at residues 621–641 and 800–1038; these read ALQR…QQLQ and RHEE…QQGQ. Low complexity-rich tracts occupy residues 943-952 and 976-993; these read KEAAGGAAPE and GASA…AAPS. Positions 1002-1019 are enriched in polar residues; sequence DSGSSTPPSRTQTPATTS.

It belongs to the eIF-3 subunit A family. Component of the eukaryotic translation initiation factor 3 (eIF-3) complex.

The protein resides in the cytoplasm. Functionally, RNA-binding component of the eukaryotic translation initiation factor 3 (eIF-3) complex, which is involved in protein synthesis of a specialized repertoire of mRNAs and, together with other initiation factors, stimulates binding of mRNA and methionyl-tRNAi to the 40S ribosome. The eIF-3 complex specifically targets and initiates translation of a subset of mRNAs involved in cell proliferation. This chain is Eukaryotic translation initiation factor 3 subunit A (tif32), found in Aspergillus oryzae (strain ATCC 42149 / RIB 40) (Yellow koji mold).